A 287-amino-acid polypeptide reads, in one-letter code: ATP synthase gamma chain (287 aa).

Belongs to the ATPase gamma chain family. F-type ATPases have 2 components, CF(1) - the catalytic core - and CF(0) - the membrane proton channel. CF(1) has five subunits: alpha(3), beta(3), gamma(1), delta(1), epsilon(1). CF(0) has three main subunits: a, b and c.

It localises to the cell inner membrane. In terms of biological role, produces ATP from ADP in the presence of a proton gradient across the membrane. The gamma chain is believed to be important in regulating ATPase activity and the flow of protons through the CF(0) complex. In Stenotrophomonas maltophilia (strain R551-3), this protein is ATP synthase gamma chain.